A 400-amino-acid chain; its full sequence is Deoxyhypusine synthase-like protein (400 aa).

Residues 372–400 form a disordered region; the sequence is KLGKEQMPEPQSTEPVATYPCGTPIKGRK.

Belongs to the deoxyhypusine synthase family.

This is Deoxyhypusine synthase-like protein from Cyanothece sp. (strain PCC 7425 / ATCC 29141).